We begin with the raw amino-acid sequence, 695 residues long: Calcium-dependent serine proteinase (695 aa).

The N-terminal stretch at 1–21 (MGKSSEAWCIVLFSVFASFSA) is a signal peptide. Positions 22–136 (EPTMHGEILS…TGFAAYYAAI (115 aa)) constitute a CUB 1 domain. 4 disulfides stabilise this stretch: C71-C89, C141-C153, C149-C162, and C164-C177. The EGF-like; calcium-binding domain occupies 137 to 178 (DVNECTDFTDVPCSHFCNNFIGGYFCSCPPEYFLHDDMRNCG). Position 155 is a (3R)-3-hydroxyasparagine (N155). N-linked (GlcNAc...) asparagine glycosylation occurs at N180. Disulfide bonds link C181/C208, C240/C257, C300/C347, C327/C360, C365/C410, and C392/C428. The 116-residue stretch at 181–296 (CSGNVFTALI…KGWKLRYHGD (116 aa)) folds into the CUB 2 domain. 2 consecutive Sushi domains span residues 298–362 (IPCP…RCQP) and 363–430 (VDCG…KCVP). N413 carries N-linked (GlcNAc...) asparagine glycosylation. In terms of domain architecture, Peptidase S1 spans 445-687 (IFGGFPAKIQ…YKDWILQTMQ (243 aa)). Residues H482 and D536 each act as charge relay system in the active site. 2 cysteine pairs are disulfide-bonded: C602–C625 and C634–C666. S638 acts as the Charge relay system in catalysis.

This sequence belongs to the peptidase S1 family. Heterodimer, consisting of heavy and light chains with disulfide bonds. The heavy chain is expected to be a regulatory subunit and the light chain contains the catalytic site. The iron and 2-oxoglutarate dependent 3-hydroxylation of aspartate and asparagine is (R) stereospecific within EGF domains.

It is found in the secreted. Its subcellular location is the extracellular space. The protein localises to the extracellular matrix. In terms of biological role, capable of degrading extracellular matrix proteins. CASP degrades type I and IV collagen and fibronectin in the presence of calcium. The sequence is that of Calcium-dependent serine proteinase from Mesocricetus auratus (Golden hamster).